We begin with the raw amino-acid sequence, 78 residues long: U7-lycotoxin-Ls1a (78 aa).

Positions 1 to 22 are cleaved as a signal peptide; sequence MKLIIFTGLALLLIVSLIDVEA. A propeptide spanning residues 23 to 26 is cleaved from the precursor; that stretch reads QNEG.

This sequence belongs to the neurotoxin 19 (CSTX) family. 07 (U7-Lctx) subfamily. Contains 4 disulfide bonds. In terms of tissue distribution, expressed by the venom gland.

It is found in the secreted. In Lycosa singoriensis (Wolf spider), this protein is U7-lycotoxin-Ls1a.